The sequence spans 419 residues: Carbohydrate sulfotransferase 12 (419 aa).

The Cytoplasmic portion of the chain corresponds to 1–5 (MTKPR). Residues 6 to 26 (LFRLWLVLGSALMILLIIVYW) form a helical; Signal-anchor for type II membrane protein membrane-spanning segment. Residues 27 to 419 (DNVGTAHFYL…YPKPENLLRD (393 aa)) lie on the Lumenal side of the membrane. Positions 78–87 (HNDLSRRKTE) are enriched in basic and acidic residues. A disordered region spans residues 78–99 (HNDLSRRKTEQPPVPAPSKPVL). Asn139 carries an N-linked (GlcNAc...) asparagine glycan. 176–182 (PKVACTN) lines the 3'-phosphoadenylyl sulfate pocket. Asn214 is a glycosylation site (N-linked (GlcNAc...) asparagine). A 3'-phosphoadenylyl sulfate-binding site is contributed by 250–258 (RDPFVRLIS). N-linked (GlcNAc...) asparagine glycans are attached at residues Asn285 and Asn375.

The protein belongs to the sulfotransferase 2 family.

It localises to the golgi apparatus membrane. The enzyme catalyses chondroitin beta-D-glucuronate + n 3'-phosphoadenylyl sulfate = chondroitin 4'-sulfate + n adenosine 3',5'-bisphosphate + n H(+). In terms of biological role, catalyzes the transfer of sulfate to position 4 of the N-acetylgalactosamine (GalNAc) residue of chondroitin and desulfated dermatan sulfate. Chondroitin sulfate constitutes the predominant proteoglycan present in cartilage and is distributed on the surfaces of many cells and extracellular matrices. Activity toward partially desulfated dermatan sulfate is however lower. Does not form 4, 6-di-O-sulfated GalNAc when chondroitin sulfate C is used as an acceptor. This Mus musculus (Mouse) protein is Carbohydrate sulfotransferase 12 (Chst12).